The chain runs to 310 residues: UDP-N-acetylenolpyruvoylglucosamine reductase (310 aa).

Residues 23–188 form the FAD-binding PCMH-type domain; sequence KVGGNAEIFF…LKAVFKVNKG (166 aa). The active site involves arginine 168. The active-site Proton donor is the serine 217. Glutamate 287 is an active-site residue.

This sequence belongs to the MurB family. The cofactor is FAD.

The protein resides in the cytoplasm. It catalyses the reaction UDP-N-acetyl-alpha-D-muramate + NADP(+) = UDP-N-acetyl-3-O-(1-carboxyvinyl)-alpha-D-glucosamine + NADPH + H(+). The protein operates within cell wall biogenesis; peptidoglycan biosynthesis. Its function is as follows. Cell wall formation. This is UDP-N-acetylenolpyruvoylglucosamine reductase from Rickettsia bellii (strain OSU 85-389).